A 603-amino-acid chain; its full sequence is Peroxisomal targeting signal receptor (603 aa).

Residue Cys10 forms a Glycyl cysteine thioester (Cys-Gly) (interchain with G-Cter in ubiquitin) linkage. The segment at 11–33 (SANSNAIAQFNKHTQQDRSLQRQ) is amphipathic helix 1 (AH1). A Glycyl lysine isopeptide (Lys-Gly) (interchain with G-Cter in ubiquitin) cross-link involves residue Lys22. Residues 23–49 (HTQQDRSLQRQAANQQGIVQNGQGFKK) are disordered. Over residues 31–45 (QRQAANQQGIVQNGQ) the composition is skewed to polar residues. An amphipathic helix 2 (AH2) region spans residues 58–76 (RQNMDQFMNNGPSQSNFQF). Short sequence motifs (wxxxF/Y motif) lie at residues 99 to 103 (WTNEF), 128 to 132 (WATEF), and 192 to 196 (WDNQF). The interval 232-248 (FQEVWDSLNSEEVENDF) is amphipathic helix 4 (AH4). The WxxxF/Y motif 4 signature appears at 271 to 275 (WEKDF). 5 TPR repeats span residues 304-338 (ESDPYEIGLQLMENGAKLSEAALAFEAAIQRNEGH), 339-372 (INAWLKLGEVQTQNEKEIAGISALEKCLELHPEN), 449-482 (PDVQMGLGVLFYANEDFDKTIDCFKAALSIKPDD), 484-516 (VLWNRLGASLANSNRSEEAVDAYFKALELKPTF), and 518-550 (RARYNLGVSCINIGCYKEAAEHLLSGLSMHQVE).

This sequence belongs to the peroxisomal targeting signal receptor family. In terms of assembly, interacts (via WxxxF/Y and LVxEF motifs) with PEX14; promoting translocation through the PEX13-PEX14 docking complex. Post-translationally, monoubiquitinated at Cys-10 by PEX2 during PEX5 passage through the retrotranslocation channel: monoubiquitination acts as a signal for PEX5 extraction and is required for proper export from peroxisomes and recycling. When PEX5 recycling is compromised, polyubiquitinated at Lys-22 by PEX10 during its passage through the retrotranslocation channel, leading to its degradation.

The protein resides in the cytoplasm. The protein localises to the cytosol. It localises to the peroxisome matrix. Its function is as follows. Receptor that mediates peroxisomal import of proteins containing a C-terminal PTS1-type tripeptide peroxisomal targeting signal (SKL-type). Binds to cargo proteins containing a PTS1 peroxisomal targeting signal in the cytosol, and translocates them into the peroxisome matrix by passing through the PEX13-PEX14 docking complex along with cargo proteins. PEX5 receptor is then retrotranslocated into the cytosol, leading to release of bound cargo in the peroxisome matrix, and reset for a subsequent peroxisome import cycle. The polypeptide is Peroxisomal targeting signal receptor (PEX5) (Debaryomyces hansenii (strain ATCC 36239 / CBS 767 / BCRC 21394 / JCM 1990 / NBRC 0083 / IGC 2968) (Yeast)).